The primary structure comprises 407 residues: Carbamoyl phosphate synthase small chain (407 aa).

A CPSase region spans residues 1 to 205 (MTETTSKTAP…LADGYGEQDT (205 aa)). 3 residues coordinate L-glutamine: Ser-60, Gly-257, and Gly-259. Residues 209–397 (HVVALDFGVK…INLIREKKGE (189 aa)) form the Glutamine amidotransferase type-1 domain. Residue Cys-286 is the Nucleophile of the active site. 5 residues coordinate L-glutamine: Leu-287, Gln-290, Asn-328, Gly-330, and Phe-331. Catalysis depends on residues His-370 and Glu-372.

The protein belongs to the CarA family. Composed of two chains; the small (or glutamine) chain promotes the hydrolysis of glutamine to ammonia, which is used by the large (or ammonia) chain to synthesize carbamoyl phosphate. Tetramer of heterodimers (alpha,beta)4.

The enzyme catalyses hydrogencarbonate + L-glutamine + 2 ATP + H2O = carbamoyl phosphate + L-glutamate + 2 ADP + phosphate + 2 H(+). It carries out the reaction L-glutamine + H2O = L-glutamate + NH4(+). Its pathway is amino-acid biosynthesis; L-arginine biosynthesis; carbamoyl phosphate from bicarbonate: step 1/1. It functions in the pathway pyrimidine metabolism; UMP biosynthesis via de novo pathway; (S)-dihydroorotate from bicarbonate: step 1/3. In terms of biological role, small subunit of the glutamine-dependent carbamoyl phosphate synthetase (CPSase). CPSase catalyzes the formation of carbamoyl phosphate from the ammonia moiety of glutamine, carbonate, and phosphate donated by ATP, constituting the first step of 2 biosynthetic pathways, one leading to arginine and/or urea and the other to pyrimidine nucleotides. The small subunit (glutamine amidotransferase) binds and cleaves glutamine to supply the large subunit with the substrate ammonia. This chain is Carbamoyl phosphate synthase small chain, found in Brucella anthropi (strain ATCC 49188 / DSM 6882 / CCUG 24695 / JCM 21032 / LMG 3331 / NBRC 15819 / NCTC 12168 / Alc 37) (Ochrobactrum anthropi).